We begin with the raw amino-acid sequence, 285 residues long: Tryptophan synthase alpha chain (285 aa).

Residues Glu53 and Asp64 each act as proton acceptor in the active site.

The protein belongs to the TrpA family. In terms of assembly, tetramer of two alpha and two beta chains.

It carries out the reaction (1S,2R)-1-C-(indol-3-yl)glycerol 3-phosphate + L-serine = D-glyceraldehyde 3-phosphate + L-tryptophan + H2O. It participates in amino-acid biosynthesis; L-tryptophan biosynthesis; L-tryptophan from chorismate: step 5/5. The alpha subunit is responsible for the aldol cleavage of indoleglycerol phosphate to indole and glyceraldehyde 3-phosphate. The protein is Tryptophan synthase alpha chain of Bordetella pertussis (strain Tohama I / ATCC BAA-589 / NCTC 13251).